The following is a 524-amino-acid chain: 56 kDa type-specific antigen (524 aa).

The signal sequence occupies residues 1 to 22; the sequence is MKKIMLIASAMSALSLPFSASA. Residues 67 to 87 traverse the membrane as a helical segment; it reads LTTGLPFGGTLAAGMTIAPGF. Disordered regions lie at residues 112–132 and 387–422; these read SKGE…RKRF and EKLA…KGKE. 2 stretches are compositionally biased toward basic and acidic residues: residues 395-405 and 413-422; these read EDAKNQGEGDC and EKSKEGKGKE. The chain crosses the membrane as a helical span at residues 472–492; the sequence is TGMVASGALGVAINAAEGVYV.

The protein localises to the cell membrane. May be an adherent factor for rickettsial adsorption to the host-cell surface and a determinant of virulence of individual rickettsial strain. It is the major outer membrane protein. The polypeptide is 56 kDa type-specific antigen (Orientia tsutsugamushi (Rickettsia tsutsugamushi)).